The primary structure comprises 342 residues: Sorting nexin-15 (342 aa).

The 130-residue stretch at 1–130 (MSRQAKDDFL…EFFRGGEVTR (130 aa)) folds into the PX domain. The a 1,2-diacyl-sn-glycero-3-phospho-(1D-myo-inositol-3-phosphate) site is built by R51, S53, R87, and R96. At R105 the chain carries Omega-N-methylarginine. Phosphoserine is present on residues S201 and S227. The disordered stretch occupies residues 245 to 267 (DQEPWEPGGQEEEEDGEGGPTPA). Residues 265-342 (TPAYLSQATE…LRLHLSQLPP (78 aa)) form the MIT domain.

Belongs to the sorting nexin family. Homodimer. Interacts with SNX1, SNX2 and SNX4. As to expression, widely expressed.

Its subcellular location is the cytoplasm. It is found in the membrane. It localises to the cytoplasmic vesicle membrane. Functionally, may be involved in several stages of intracellular trafficking. Overexpression of SNX15 disrupts the normal trafficking of proteins from the plasma membrane to recycling endosomes or the TGN. The sequence is that of Sorting nexin-15 (SNX15) from Homo sapiens (Human).